A 233-amino-acid chain; its full sequence is Ribonuclease HII (233 aa).

The 191-residue stretch at Lys-21–Leu-211 folds into the RNase H type-2 domain. The a divalent metal cation site is built by Asp-27, Glu-28, and Asp-119.

This sequence belongs to the RNase HII family. Mn(2+) is required as a cofactor. The cofactor is Mg(2+).

The protein localises to the cytoplasm. It catalyses the reaction Endonucleolytic cleavage to 5'-phosphomonoester.. Its function is as follows. Endonuclease that specifically degrades the RNA of RNA-DNA hybrids. The protein is Ribonuclease HII of Streptomyces avermitilis (strain ATCC 31267 / DSM 46492 / JCM 5070 / NBRC 14893 / NCIMB 12804 / NRRL 8165 / MA-4680).